The chain runs to 259 residues: Cysteine protease IpaJ (259 aa).

Catalysis depends on residues Cys64, His206, and Asp218.

The protein resides in the secreted. Its subcellular location is the host cytoplasm. In terms of biological role, virulence factor that eliminates N-myristoyl protein modifications in infected host cells. Acts as a cysteine protease that cleaves the peptide bond between N-myristoylated Gly-2 and Asn-3 of human ARF1, leading to the elimination of the myristoyl group and alteration of protein trafficking in host cell. Could also cleave an array of N-myristoylated host proteins involved in cellular growth, signal transduction, autophagasome maturation and organelle function. The sequence is that of Cysteine protease IpaJ (ipaJ) from Shigella flexneri.